The sequence spans 298 residues: Ribosomal protein L11 methyltransferase (298 aa).

The S-adenosyl-L-methionine site is built by Thr152, Gly173, Asp195, and Asn234.

It belongs to the methyltransferase superfamily. PrmA family.

It is found in the cytoplasm. It catalyses the reaction L-lysyl-[protein] + 3 S-adenosyl-L-methionine = N(6),N(6),N(6)-trimethyl-L-lysyl-[protein] + 3 S-adenosyl-L-homocysteine + 3 H(+). Methylates ribosomal protein L11. The sequence is that of Ribosomal protein L11 methyltransferase from Ralstonia nicotianae (strain ATCC BAA-1114 / GMI1000) (Ralstonia solanacearum).